We begin with the raw amino-acid sequence, 109 residues long: Fluoride-specific ion channel FluC (109 aa).

The next 3 helical transmembrane spans lie at 21–41 (LTLN…GFFV), 52–72 (ILFS…YFLY), and 84–104 (IIFF…GFWI).

Belongs to the fluoride channel Fluc/FEX (TC 1.A.43) family.

It is found in the cell inner membrane. The enzyme catalyses fluoride(in) = fluoride(out). Its function is as follows. Fluoride-specific ion channel. Important for reducing fluoride concentration in the cell, thus reducing its toxicity. The protein is Fluoride-specific ion channel FluC of Prochlorococcus marinus (strain MIT 9301).